Consider the following 509-residue polypeptide: DNA primase large subunit (509 aa).

An interdomain linker region spans residues 253–270; it reads LSHSYTGQDYSTQGNVGK. Positions 266–509 are interacts with PRIM1; sequence GNVGKISLDQ…GLEDYFSEDS (244 aa). [4Fe-4S] cluster-binding residues include Cys287, Cys367, Cys384, and Cys424. The RNA:DNA duplex-binding stretch occupies residues 300–442; that stretch reads HLRHGGRMQY…NVDDCGFSLN (143 aa). Residues 461–486 form a disordered region; the sequence is IKKEPIQPETPQPKPSVQKTKDASSA. At Thr470 the chain carries Phosphothreonine.

It belongs to the eukaryotic-type primase large subunit family. As to quaternary structure, heterodimer of a catalytic subunit PRIM1 and a regulatory subunit PRIM2, also known as the DNA primase complex. Interacts via (C-terminus) with PRIM1. Component of the alpha DNA polymerase complex (also known as the alpha DNA polymerase-primase complex) consisting of four subunits: the catalytic subunit POLA1, the regulatory subunit POLA2, and the primase complex subunits PRIM1 and PRIM2 respectively. Within the complex, POLA1 directly interacts with PRIM2. [4Fe-4S] cluster serves as cofactor.

Functionally, regulatory subunit of the DNA primase complex and component of the DNA polymerase alpha complex (also known as the alpha DNA polymerase-primase complex) which play an essential role in the initiation of DNA synthesis. During the S phase of the cell cycle, the DNA polymerase alpha complex (composed of a catalytic subunit POLA1, an accessory subunit POLA2 and two primase subunits, the catalytic subunit PRIM1 and the regulatory subunit PRIM2) is recruited to DNA at the replicative forks via direct interactions with MCM10 and WDHD1. The primase subunit of the polymerase alpha complex initiates DNA synthesis by oligomerising short RNA primers on both leading and lagging strands. These primers are initially extended by the polymerase alpha catalytic subunit and subsequently transferred to polymerase delta and polymerase epsilon for processive synthesis on the lagging and leading strand, respectively. In the primase complex, both subunits are necessary for the initial di-nucleotide formation, but the extension of the primer depends only on the catalytic subunit. Binds RNA:DNA duplex and coordinates the catalytic activities of PRIM1 and POLA2 during primase-to-polymerase switch. This is DNA primase large subunit (PRIM2) from Homo sapiens (Human).